The following is a 124-amino-acid chain: Glycine cleavage system H protein (124 aa).

In terms of domain architecture, Lipoyl-binding spans 19–101; it reads VATVGITDHA…ESGAWFFRMT (83 aa). Position 60 is an N6-lipoyllysine (Lys-60).

It belongs to the GcvH family. In terms of assembly, the glycine cleavage system is composed of four proteins: P, T, L and H. (R)-lipoate serves as cofactor.

Functionally, the glycine cleavage system catalyzes the degradation of glycine. The H protein shuttles the methylamine group of glycine from the P protein to the T protein. The protein is Glycine cleavage system H protein of Acidiphilium cryptum (strain JF-5).